A 167-amino-acid polypeptide reads, in one-letter code: Phosphopantetheine adenylyltransferase (167 aa).

Ser-11 provides a ligand contact to substrate. ATP-binding positions include 11-12 (SF) and His-19. 3 residues coordinate substrate: Lys-43, Thr-76, and Arg-90. ATP is bound by residues 91–93 (GIR), Glu-101, and 126–132 (YDALSST).

This sequence belongs to the bacterial CoaD family. In terms of assembly, homohexamer. The cofactor is Mg(2+).

It localises to the cytoplasm. It carries out the reaction (R)-4'-phosphopantetheine + ATP + H(+) = 3'-dephospho-CoA + diphosphate. Its pathway is cofactor biosynthesis; coenzyme A biosynthesis; CoA from (R)-pantothenate: step 4/5. In terms of biological role, reversibly transfers an adenylyl group from ATP to 4'-phosphopantetheine, yielding dephospho-CoA (dPCoA) and pyrophosphate. This Lacticaseibacillus paracasei (strain ATCC 334 / BCRC 17002 / CCUG 31169 / CIP 107868 / KCTC 3260 / NRRL B-441) (Lactobacillus paracasei) protein is Phosphopantetheine adenylyltransferase.